Here is a 289-residue protein sequence, read N- to C-terminus: 4-diphosphocytidyl-2-C-methyl-D-erythritol kinase (289 aa).

Lys-10 is an active-site residue. An ATP-binding site is contributed by 99-109 (PMGGGLGGGSS). Asp-141 is a catalytic residue.

The protein belongs to the GHMP kinase family. IspE subfamily. As to quaternary structure, homodimer.

The enzyme catalyses 4-CDP-2-C-methyl-D-erythritol + ATP = 4-CDP-2-C-methyl-D-erythritol 2-phosphate + ADP + H(+). Its pathway is isoprenoid biosynthesis; isopentenyl diphosphate biosynthesis via DXP pathway; isopentenyl diphosphate from 1-deoxy-D-xylulose 5-phosphate: step 3/6. In terms of biological role, catalyzes the phosphorylation of the position 2 hydroxy group of 4-diphosphocytidyl-2C-methyl-D-erythritol. The polypeptide is 4-diphosphocytidyl-2-C-methyl-D-erythritol kinase (Enterobacter sp. (strain 638)).